The following is a 197-amino-acid chain: Imidazoleglycerol-phosphate dehydratase (197 aa).

It belongs to the imidazoleglycerol-phosphate dehydratase family.

Its subcellular location is the cytoplasm. It catalyses the reaction D-erythro-1-(imidazol-4-yl)glycerol 3-phosphate = 3-(imidazol-4-yl)-2-oxopropyl phosphate + H2O. Its pathway is amino-acid biosynthesis; L-histidine biosynthesis; L-histidine from 5-phospho-alpha-D-ribose 1-diphosphate: step 6/9. This chain is Imidazoleglycerol-phosphate dehydratase, found in Marinobacter nauticus (strain ATCC 700491 / DSM 11845 / VT8) (Marinobacter aquaeolei).